The sequence spans 253 residues: Sulfate transporter CysZ (253 aa).

4 consecutive transmembrane segments (helical) span residues 31–51, 75–95, 151–171, and 222–242; these read FVIL…WWLF, LLWP…FSTI, IVLL…PVLW, and IPLL…AMWV.

Belongs to the CysZ family.

It is found in the cell inner membrane. In terms of biological role, high affinity, high specificity proton-dependent sulfate transporter, which mediates sulfate uptake. Provides the sulfur source for the cysteine synthesis pathway. The polypeptide is Sulfate transporter CysZ (Escherichia coli O81 (strain ED1a)).